The primary structure comprises 518 residues: PTS system mannitol-specific EIICB component (518 aa).

Residues 1-31 (MDTMSNSQQNKGIGRKVQAFGSFLSSMIMPN) lie on the Cytoplasmic side of the membrane. One can recognise a PTS EIIC type-2 domain in the interval 20 to 352 (FGSFLSSMIM…LKFTKDPKQD (333 aa)). A helical transmembrane segment spans residues 32 to 53 (IGAFIAWGFIAAIFIDNGWFPN). Over 54-57 (KDLA) the chain is Extracellular. Residues 58–78 (QLAGPMITYLIPLLIAFSGGR) traverse the membrane as a helical segment. Topologically, residues 79 to 142 (LIHDLRGGII…QGFEMLFNNF (64 aa)) are cytoplasmic. The helical transmembrane segment at 143–164 (SAGILGFIMTIFGFEVLAPIMK) threads the bilayer. Residues 165 to 173 (FIMHILSVG) are Extracellular-facing. A helical membrane pass occupies residues 174 to 194 (VEALVHAHLLPLVSILVEPAK). The Cytoplasmic portion of the chain corresponds to 195–281 (IVFLNNAINH…VLMRPLLFVS (87 aa)). Residues 282-301 (VILGGMTGVATYSLLDFGFK) traverse the membrane as a helical segment. The Extracellular segment spans residues 302–321 (TPASPGSIIVYAINAPKGEF). The chain crosses the membrane as a helical span at residues 322–343 (LHMLTGVVLAALVSFVVSALIL). At 344–518 (KFTKDPKQDL…LINNLKEDQD (175 aa)) the chain is on the cytoplasmic side. The segment at 369-406 (SVASKLSAKDDNKAADNKTAETTTATAASNKAEDKDSD) is disordered. Residues 375 to 387 (SAKDDNKAADNKT) show a composition bias toward basic and acidic residues. Positions 388–398 (AETTTATAASN) are enriched in low complexity. The region spanning 426 to 518 (DHVIFACDAG…LINNLKEDQD (93 aa)) is the PTS EIIB type-2 domain. Cys432 serves as the catalytic Phosphocysteine intermediate. A Phosphocysteine; by EIIA modification is found at Cys432.

Homodimer.

It is found in the cell membrane. It catalyses the reaction D-mannitol(out) + N(pros)-phospho-L-histidyl-[protein] = D-mannitol 1-phosphate(in) + L-histidyl-[protein]. In terms of biological role, the phosphoenolpyruvate-dependent sugar phosphotransferase system (sugar PTS), a major carbohydrate active transport system, catalyzes the phosphorylation of incoming sugar substrates concomitantly with their translocation across the cell membrane. The enzyme II CmtAB PTS system is involved in D-mannitol transport. This Staphylococcus carnosus protein is PTS system mannitol-specific EIICB component.